The following is a 363-amino-acid chain: D-xylulose reductase (363 aa).

Zn(2+) contacts are provided by cysteine 41, histidine 66, and glutamate 159. 183–188 (GAGPVG) is an NAD(+) binding site.

It belongs to the zinc-containing alcohol dehydrogenase family. It depends on Zn(2+) as a cofactor.

The catalysed reaction is xylitol + NAD(+) = D-xylulose + NADH + H(+). It functions in the pathway carbohydrate degradation; L-arabinose degradation via L-arabinitol; D-xylulose 5-phosphate from L-arabinose (fungal route): step 4/5. The polypeptide is D-xylulose reductase (XYL2) (Scheffersomyces stipitis (strain ATCC 58785 / CBS 6054 / NBRC 10063 / NRRL Y-11545) (Yeast)).